A 118-amino-acid polypeptide reads, in one-letter code: MARVKRGVIARARHKKILKQAKGYYGARSRVYRVAFQAVIKAGQYAYRDRRQRKRQFRQLWIARINAAARQNGISYSKFINGLKKASVEIDRKILADIAVFDKVAFTTLVEKAKAALA.

It belongs to the bacterial ribosomal protein bL20 family.

Binds directly to 23S ribosomal RNA and is necessary for the in vitro assembly process of the 50S ribosomal subunit. It is not involved in the protein synthesizing functions of that subunit. The chain is Large ribosomal subunit protein bL20 from Shigella flexneri serotype 5b (strain 8401).